Reading from the N-terminus, the 373-residue chain is 3 beta-hydroxysteroid dehydrogenase/Delta 5--&gt;4-isomerase type 1 (373 aa).

Residues 10-15, Y155, and K159 contribute to the NADP(+) site; that span reads GAGGFV. K159 functions as the Proton donor in the catalytic mechanism. Residues 288–308 form a helical membrane-spanning segment; the sequence is LPLLYWLAFLLETVSFLLRPF.

It belongs to the 3-beta-HSD family. Adrenal glands, kidney, testes and ovaries.

The protein resides in the endoplasmic reticulum membrane. The protein localises to the mitochondrion membrane. The catalysed reaction is a 3beta-hydroxy-Delta(5)-steroid + NAD(+) = a 3-oxo-Delta(5)-steroid + NADH + H(+). It carries out the reaction pregnenolone + NAD(+) = pregn-5-ene-3,20-dione + NADH + H(+). It catalyses the reaction 3beta-hydroxyandrost-5-en-17-one + NAD(+) = androst-5-ene-3,17-dione + NADH + H(+). The enzyme catalyses androst-5-en-3beta,17beta-diol + NAD(+) = 17beta-hydroxy-androst-5-en-3-one + NADH + H(+). The catalysed reaction is a 3beta-hydroxysteroid + NADP(+) = a 3-oxosteroid + NADPH + H(+). It carries out the reaction 5alpha-androstane-3beta,17beta-diol + NADP(+) = 17beta-hydroxy-5alpha-androstan-3-one + NADPH + H(+). It catalyses the reaction 3beta-hydroxy-5alpha-androstan-17-one + NADP(+) = 5alpha-androstan-3,17-dione + NADPH + H(+). The enzyme catalyses a 3-oxo-Delta(5)-steroid = a 3-oxo-Delta(4)-steroid. The catalysed reaction is pregn-5-ene-3,20-dione = progesterone. It carries out the reaction androst-5-ene-3,17-dione = androst-4-ene-3,17-dione. It catalyses the reaction 17beta-hydroxy-androst-5-en-3-one = testosterone. The enzyme catalyses 5alpha-androstane-3beta,17beta-diol + NAD(+) = 17beta-hydroxy-5alpha-androstan-3-one + NADH + H(+). The protein operates within steroid hormone biosynthesis. It functions in the pathway steroid metabolism. A bifunctional enzyme responsible for the oxidation and isomerization of 3beta-hydroxy-Delta(5)-steroid precursors to 3-oxo-Delta(4)-steroids, an essential step in steroid hormone biosynthesis. Specifically catalyzes the conversion of pregnenolone to progesterone, dehydroepiandrosterone (DHEA) to 4-androstenedione, and androstenediol to testosterone. Additionally, catalyzes the interconversion between 3beta-hydroxy and 3-oxo-5alpha-androstane steroids controlling the bioavalability of the active forms. Specifically converts dihydrotestosterone to its inactive form 5alpha-androstanediol, that does not bind androgen receptor/AR. Also converts androstanedione, a precursor of testosterone and estrone, to epiandrosterone. Expected to use NAD(+) as preferred electron donor for the 3beta-hydroxy-steroid dehydrogenase activity and NADPH for the 3-ketosteroid reductase activity. The sequence is that of 3 beta-hydroxysteroid dehydrogenase/Delta 5--&gt;4-isomerase type 1 from Rattus norvegicus (Rat).